Here is a 439-residue protein sequence, read N- to C-terminus: Trigger factor (439 aa).

The 86-residue stretch at 175–260 (GDRVTISYRS…VERLSVKDEI (86 aa)) folds into the PPIase FKBP-type domain.

It belongs to the FKBP-type PPIase family. Tig subfamily.

The protein resides in the cytoplasm. The enzyme catalyses [protein]-peptidylproline (omega=180) = [protein]-peptidylproline (omega=0). Its function is as follows. Involved in protein export. Acts as a chaperone by maintaining the newly synthesized protein in an open conformation. Functions as a peptidyl-prolyl cis-trans isomerase. In Anaplasma phagocytophilum (strain HZ), this protein is Trigger factor.